A 103-amino-acid chain; its full sequence is Small ribosomal subunit protein uS10 (103 aa).

Belongs to the universal ribosomal protein uS10 family. Part of the 30S ribosomal subunit.

Its function is as follows. Involved in the binding of tRNA to the ribosomes. The sequence is that of Small ribosomal subunit protein uS10 from Bordetella parapertussis (strain 12822 / ATCC BAA-587 / NCTC 13253).